Reading from the N-terminus, the 384-residue chain is Succinyl-diaminopimelate desuccinylase (384 aa).

H72 serves as a coordination point for Zn(2+). D74 is a catalytic residue. Residue D105 coordinates Zn(2+). Catalysis depends on E139, which acts as the Proton acceptor. Zn(2+) contacts are provided by E140, E168, and H355.

The protein belongs to the peptidase M20A family. DapE subfamily. Homodimer. Zn(2+) is required as a cofactor. The cofactor is Co(2+).

It carries out the reaction N-succinyl-(2S,6S)-2,6-diaminopimelate + H2O = (2S,6S)-2,6-diaminopimelate + succinate. Its pathway is amino-acid biosynthesis; L-lysine biosynthesis via DAP pathway; LL-2,6-diaminopimelate from (S)-tetrahydrodipicolinate (succinylase route): step 3/3. Catalyzes the hydrolysis of N-succinyl-L,L-diaminopimelic acid (SDAP), forming succinate and LL-2,6-diaminopimelate (DAP), an intermediate involved in the bacterial biosynthesis of lysine and meso-diaminopimelic acid, an essential component of bacterial cell walls. This Blochmanniella pennsylvanica (strain BPEN) protein is Succinyl-diaminopimelate desuccinylase.